The following is a 208-amino-acid chain: Methylthioribulose-1-phosphate dehydratase (208 aa).

Residues His-98 and His-100 each contribute to the Zn(2+) site.

Belongs to the aldolase class II family. MtnB subfamily. Zn(2+) serves as cofactor.

It carries out the reaction 5-(methylsulfanyl)-D-ribulose 1-phosphate = 5-methylsulfanyl-2,3-dioxopentyl phosphate + H2O. Its pathway is amino-acid biosynthesis; L-methionine biosynthesis via salvage pathway; L-methionine from S-methyl-5-thio-alpha-D-ribose 1-phosphate: step 2/6. Its function is as follows. Catalyzes the dehydration of methylthioribulose-1-phosphate (MTRu-1-P) into 2,3-diketo-5-methylthiopentyl-1-phosphate (DK-MTP-1-P). The chain is Methylthioribulose-1-phosphate dehydratase from Hahella chejuensis (strain KCTC 2396).